The sequence spans 48 residues: uncharacterized protein (48 aa).

The tract at residues 1-48 (MVREKKNPSSAAVSAASVKGDAGPTQHYGGGKRTSQNQQYKKHNMGQS) is disordered. The segment covering 9 to 18 (SSAAVSAASV) has biased composition (low complexity).

This is an uncharacterized protein from Bacillus subtilis (strain 168).